The chain runs to 533 residues: (E)-beta-farnesene synthase (533 aa).

Asp286, Asp290, Asn430, Ser434, and Glu438 together coordinate Mg(2+). The short motif at 286-290 (DDMMD) is the DDXXD motif element.

This sequence belongs to the terpene synthase family. The cofactor is Mg(2+). Co(2+) serves as cofactor. Mn(2+) is required as a cofactor.

The protein localises to the cytoplasm. The catalysed reaction is (2E,6E)-farnesyl diphosphate = (E)-beta-farnesene + diphosphate. Its pathway is secondary metabolite biosynthesis; terpenoid biosynthesis. Sesquiterpene cyclase catalyzing the production of sixfold more beta-farnesene than alpha-bergamotene from farnesyl diphosphate. Involved in indirect defense by producing volatile signals attracting natural enemies of herbivores. This Zea diploperennis (Diploperennial teosinte) protein is (E)-beta-farnesene synthase.